The following is a 320-amino-acid chain: Malate dehydrogenase (320 aa).

NAD(+) contacts are provided by residues 10–15 and Asp-34; that span reads GAGQIG. Residues Arg-83 and Arg-89 each contribute to the substrate site. NAD(+) contacts are provided by residues Asn-96 and 119–121; that span reads ITN. 2 residues coordinate substrate: Asn-121 and Arg-152. The active-site Proton acceptor is His-176.

The protein belongs to the LDH/MDH superfamily. MDH type 3 family.

It carries out the reaction (S)-malate + NAD(+) = oxaloacetate + NADH + H(+). In terms of biological role, catalyzes the reversible oxidation of malate to oxaloacetate. This Methylobacterium radiotolerans (strain ATCC 27329 / DSM 1819 / JCM 2831 / NBRC 15690 / NCIMB 10815 / 0-1) protein is Malate dehydrogenase.